The sequence spans 203 residues: Glycerol-3-phosphate acyltransferase (203 aa).

Helical transmembrane passes span 4–24, 80–100, 116–136, and 138–158; these read LVLL…AVLI, PFLL…PIFF, APIG…TVFI, and GYSS…TWFV.

This sequence belongs to the PlsY family. In terms of assembly, probably interacts with PlsX.

It is found in the cell inner membrane. The catalysed reaction is an acyl phosphate + sn-glycerol 3-phosphate = a 1-acyl-sn-glycero-3-phosphate + phosphate. Its pathway is lipid metabolism; phospholipid metabolism. Catalyzes the transfer of an acyl group from acyl-phosphate (acyl-PO(4)) to glycerol-3-phosphate (G3P) to form lysophosphatidic acid (LPA). This enzyme utilizes acyl-phosphate as fatty acyl donor, but not acyl-CoA or acyl-ACP. This chain is Glycerol-3-phosphate acyltransferase, found in Photobacterium profundum (strain SS9).